Here is a 322-residue protein sequence, read N- to C-terminus: Ribosomal RNA small subunit methyltransferase H (322 aa).

S-adenosyl-L-methionine-binding positions include 47–49 (GGH), D67, F93, D112, and Q119.

It belongs to the methyltransferase superfamily. RsmH family.

The protein localises to the cytoplasm. The enzyme catalyses cytidine(1402) in 16S rRNA + S-adenosyl-L-methionine = N(4)-methylcytidine(1402) in 16S rRNA + S-adenosyl-L-homocysteine + H(+). Functionally, specifically methylates the N4 position of cytidine in position 1402 (C1402) of 16S rRNA. The sequence is that of Ribosomal RNA small subunit methyltransferase H from Stenotrophomonas maltophilia (strain R551-3).